The primary structure comprises 317 residues: tRNA dimethylallyltransferase (317 aa).

ATP is bound at residue 14 to 21; that stretch reads GPTAVGKT. 16-21 contacts substrate; it reads TAVGKT. An interaction with substrate tRNA region spans residues 39 to 42; sequence DSMQ.

This sequence belongs to the IPP transferase family. As to quaternary structure, monomer. The cofactor is Mg(2+).

The enzyme catalyses adenosine(37) in tRNA + dimethylallyl diphosphate = N(6)-dimethylallyladenosine(37) in tRNA + diphosphate. Catalyzes the transfer of a dimethylallyl group onto the adenine at position 37 in tRNAs that read codons beginning with uridine, leading to the formation of N6-(dimethylallyl)adenosine (i(6)A). The sequence is that of tRNA dimethylallyltransferase from Bacillus cereus (strain G9842).